A 226-amino-acid polypeptide reads, in one-letter code: 7-cyano-7-deazaguanine synthase (226 aa).

Position 10-20 (10-20 (LSGGLDSATAA)) interacts with ATP. The Zn(2+) site is built by Cys-191, Cys-199, Cys-202, and Cys-205.

Belongs to the QueC family. Zn(2+) serves as cofactor.

It carries out the reaction 7-carboxy-7-deazaguanine + NH4(+) + ATP = 7-cyano-7-deazaguanine + ADP + phosphate + H2O + H(+). The protein operates within purine metabolism; 7-cyano-7-deazaguanine biosynthesis. Functionally, catalyzes the ATP-dependent conversion of 7-carboxy-7-deazaguanine (CDG) to 7-cyano-7-deazaguanine (preQ(0)). This is 7-cyano-7-deazaguanine synthase from Synechococcus sp. (strain CC9311).